Here is a 74-residue protein sequence, read N- to C-terminus: MKNSSIILVLVFFFFISSSGEAKTCSDGWTCVGEDKCKVNCMAKHKGVGTCTLYIIPSFPAPITSYICDCMFDC.

An N-terminal signal peptide occupies residues 1-22; the sequence is MKNSSIILVLVFFFFISSSGEA. 4 disulfides stabilise this stretch: C25/C74, C31/C51, C37/C68, and C41/C70.

The protein belongs to the DEFL family.

It is found in the secreted. The chain is Putative defensin-like protein 186 (LCR40) from Arabidopsis thaliana (Mouse-ear cress).